Consider the following 907-residue polypeptide: Protein translocase subunit SecA (907 aa).

Residues glutamine 87, 105 to 109 (GEGKT), and aspartate 512 each bind ATP. 4 residues coordinate Zn(2+): cysteine 891, cysteine 893, cysteine 902, and histidine 903.

This sequence belongs to the SecA family. Monomer and homodimer. Part of the essential Sec protein translocation apparatus which comprises SecA, SecYEG and auxiliary proteins SecDF-YajC and YidC. Requires Zn(2+) as cofactor.

Its subcellular location is the cell inner membrane. It localises to the cytoplasm. It carries out the reaction ATP + H2O + cellular proteinSide 1 = ADP + phosphate + cellular proteinSide 2.. Part of the Sec protein translocase complex. Interacts with the SecYEG preprotein conducting channel. Has a central role in coupling the hydrolysis of ATP to the transfer of proteins into and across the cell membrane, serving both as a receptor for the preprotein-SecB complex and as an ATP-driven molecular motor driving the stepwise translocation of polypeptide chains across the membrane. The chain is Protein translocase subunit SecA from Shewanella loihica (strain ATCC BAA-1088 / PV-4).